Here is a 104-residue protein sequence, read N- to C-terminus: Flagellar hook-basal body complex protein FliE (104 aa).

It belongs to the FliE family.

The protein resides in the bacterial flagellum basal body. The protein is Flagellar hook-basal body complex protein FliE of Salmonella typhi.